The sequence spans 620 residues: Zinc metalloproteinase-disintegrin-like ACLD (620 aa).

The signal sequence occupies residues 1 to 20; sequence MIQVLLVTLCLAVFPYQGSS. The propeptide occupies 21–189; it reads IILESGNVND…KKASQLNLTP (169 aa). The 197-residue stretch at 199-395 folds into the Peptidase M12B domain; sequence KYVEFVVVLD…RRPKCILNEP (197 aa). Glutamate 202 contacts Ca(2+). N-linked (GlcNAc...) asparagine glycans are attached at residues asparagine 259 and asparagine 265. Residue aspartate 286 coordinates Ca(2+). 3 disulfides stabilise this stretch: cysteine 310/cysteine 390, cysteine 350/cysteine 374, and cysteine 352/cysteine 357. Histidine 335 serves as a coordination point for Zn(2+). Glutamate 336 is an active-site residue. Zn(2+) is bound by residues histidine 339 and histidine 345. An N-linked (GlcNAc...) asparagine glycan is attached at asparagine 373. Ca(2+) is bound by residues cysteine 390 and asparagine 393. A glycan (N-linked (GlcNAc...) asparagine) is linked at asparagine 396. A Disintegrin domain is found at 403 to 489; sequence PPVCGNELLE…ECPTDRFQRN (87 aa). Ca(2+) is bound by residues valine 405, asparagine 408, leucine 410, glutamate 412, glutamate 415, and aspartate 418. Disulfide bonds link cysteine 406-cysteine 435, cysteine 417-cysteine 430, cysteine 419-cysteine 425, cysteine 429-cysteine 452, cysteine 443-cysteine 449, cysteine 448-cysteine 474, cysteine 461-cysteine 481, cysteine 468-cysteine 500, cysteine 493-cysteine 505, cysteine 512-cysteine 562, cysteine 527-cysteine 573, cysteine 540-cysteine 550, cysteine 557-cysteine 599, and cysteine 593-cysteine 604. Positions 467 to 469 match the D/ECD-tripeptide motif; the sequence is DCD. Asparagine 502 and asparagine 536 each carry an N-linked (GlcNAc...) asparagine glycan.

The protein belongs to the venom metalloproteinase (M12B) family. P-III subfamily. P-IIIa sub-subfamily. Monomer. Zn(2+) serves as cofactor. Expressed by the venom gland.

Its subcellular location is the secreted. Its activity is regulated as follows. Inhibited by EDTA and O-phenanthroline. Not inhibited by PMSF, benzamidine, irreversible serine-proteinase inhibitors and cysteine proteinase inhibitor E-64. Its function is as follows. Is a potent activator of prothrombin (F2). Does not elicit any hemorrhagic response. Barely inhibits collagen-induced platelet aggregation. Binds neither collagen, nor the jararhagin-monoclonal antibody MAJar3. Hydrolyzes the Aalpha-chain of fibrin and fibrinogen, without affecting the Bbeta- and gamma-chains. Is capable of triggering endothelial pro-inflammatory and procoagulant cell responses, but fails to trigger apoptosis. Induces von Willebrand factor release, and the expression of both ICAM1 and E-selectin (SELE) (without increase in VCAM1) in endothelial cells (HUVEC). Is also able to up-regulate the synthesis of the coagulation factor TF (F3). Enhances nitric oxide (NO) generation, prostacyclin production and interleukin-8 release. This Agkistrodon contortrix laticinctus (Broad-banded copperhead) protein is Zinc metalloproteinase-disintegrin-like ACLD.